The primary structure comprises 56 residues: Trypsin inhibitor 1 (56 aa).

Positions 1–25 are cleaved as a signal peptide; the sequence is MATTMAKLITLVVLAILAFVEVSVS. Positions 26–39 are excised as a propeptide; it reads GYKTSISTITIEDN. A cross-link (cyclopeptide (Gly-Asp)) is located at residues 40–53; the sequence is GRCTKSIPPICFPD. Cysteines 42 and 50 form a disulfide. The propeptide occupies 54-56; the sequence is GRP.

In terms of processing, this is a cyclic peptide.

Its function is as follows. Inhibits trypsin, cathepsin G, elastase, chymotrypsin and thrombin. Does not inhibit factor Xa. The polypeptide is Trypsin inhibitor 1 (Helianthus annuus (Common sunflower)).